A 304-amino-acid polypeptide reads, in one-letter code: Cell surface-binding protein OPG105 (304 aa).

The Alpha-carbonic anhydrase domain maps to 1–235 (MPQQLSPINI…NDDTQVYYSG (235 aa)). Topologically, residues 1-275 (MPQQLSPINI…YQKYIEGNKT (275 aa)) are virion surface. Residues 276 to 294 (FAIIAIVFVFILTAILFLM) form a helical membrane-spanning segment. At 295 to 304 (SRRYSREKQN) the chain is on the intravirion side.

It belongs to the alpha-carbonic anhydrase family. As to quaternary structure, homodimer; disulfide-linked. Apparently non-glycosylated.

Its subcellular location is the virion membrane. In terms of biological role, binds to chondroitin sulfate on the cell surface to provide virion attachment to target cell. The sequence is that of Cell surface-binding protein OPG105 (OPG105) from Rabbitpox virus (strain Utrecht) (RPV).